The chain runs to 616 residues: Chaperone protein HscA (616 aa).

Belongs to the heat shock protein 70 family.

In terms of biological role, chaperone involved in the maturation of iron-sulfur cluster-containing proteins. Has a low intrinsic ATPase activity which is markedly stimulated by HscB. Involved in the maturation of IscU. The sequence is that of Chaperone protein HscA from Salmonella paratyphi B (strain ATCC BAA-1250 / SPB7).